We begin with the raw amino-acid sequence, 244 residues long: tRNA (guanine-N(1)-)-methyltransferase (244 aa).

Residues Gly110 and 129-134 (IGDYIL) each bind S-adenosyl-L-methionine.

It belongs to the RNA methyltransferase TrmD family. As to quaternary structure, homodimer.

It is found in the cytoplasm. It catalyses the reaction guanosine(37) in tRNA + S-adenosyl-L-methionine = N(1)-methylguanosine(37) in tRNA + S-adenosyl-L-homocysteine + H(+). Specifically methylates guanosine-37 in various tRNAs. In Syntrophomonas wolfei subsp. wolfei (strain DSM 2245B / Goettingen), this protein is tRNA (guanine-N(1)-)-methyltransferase.